Reading from the N-terminus, the 202-residue chain is Snake venom metalloproteinase Ac1 (202 aa).

One can recognise a Peptidase M12B domain in the interval 6–202; that stretch reads RYMEIVIVVD…ENPPCILNKP (197 aa). Ca(2+)-binding residues include E9 and D93. Intrachain disulfides connect C117/C197 and C157/C181. H142 contributes to the Zn(2+) binding site. The active site involves E143. Zn(2+) contacts are provided by H146 and H152. Ca(2+) contacts are provided by C197 and N200.

The protein belongs to the venom metalloproteinase (M12B) family. P-I subfamily. In terms of assembly, monomer. Requires Zn(2+) as cofactor. As to expression, expressed by the venom gland.

The protein resides in the secreted. Its function is as follows. Snake venom metalloproteinase that impairs hemostasis in the envenomed animal. The chain is Snake venom metalloproteinase Ac1 from Deinagkistrodon acutus (Hundred-pace snake).